The following is a 90-amino-acid chain: Acylphosphatase (90 aa).

The region spanning 5 to 90 (SFVVHVWGQV…PPQKGGFHTN (86 aa)) is the Acylphosphatase-like domain. Active-site residues include R20 and N38.

Belongs to the acylphosphatase family.

The enzyme catalyses an acyl phosphate + H2O = a carboxylate + phosphate + H(+). The sequence is that of Acylphosphatase (acyP) from Aeromonas salmonicida (strain A449).